The primary structure comprises 224 residues: Putative O-methyltransferase MLBr01075 (224 aa).

Residues V51, E73, 75-76 (GT), S81, D99, and I100 contribute to the S-adenosyl-L-methionine site. D147 is a substrate binding site. Position 149 (D149) interacts with S-adenosyl-L-methionine.

Belongs to the class I-like SAM-binding methyltransferase superfamily. Cation-dependent O-methyltransferase family.

The sequence is that of Putative O-methyltransferase MLBr01075 from Mycobacterium leprae (strain Br4923).